The sequence spans 431 residues: MIERYTLPEMGKIWTDTYKLQTWLDVEIAVCEAQAELGYIPQAAVDEIKAKAKFDPQRVLEIEAEVRHDVIAFLTNVNEYVGDAGRYIHLGLTSSDVLDTALALQLVASLDLILEQLEKLIQAIRYQAQQHRYTVMVGRSHGIHAEPITFGFKLAGWLAEVLRNRDRLVRVAQSIAVGKISGAVGTYANIDPKVEAIACQKLGLEPDTASTQVISRDRHAEYVQQLALLAASLERFAVEIRNLQRTDVLEVEEYFSKGQKGSSAMPHKRNPIRSERLTGMARLVRGHAVAALENVALWHERDISHSSVERVAFPDCCILTHFMLKETTDLVKNLLVYPENMKRNMNVYGGVIFSQKVLLALVEKGMNREDAYRVVQGSAHQAWNTEGGNFEELVRADAQVTALLSAEEIDQCFDPQQHLTNLAEIYSRLDI.

Residues 4–5 (RY), 67–69 (RHD), and 93–94 (TS) each bind N(6)-(1,2-dicarboxyethyl)-AMP. His-141 serves as the catalytic Proton donor/acceptor. Gln-212 lines the N(6)-(1,2-dicarboxyethyl)-AMP pocket. The Proton donor/acceptor role is filled by Ser-262. N(6)-(1,2-dicarboxyethyl)-AMP-binding positions include Ser-263, 268 to 270 (KRN), and 307 to 311 (SVERV).

This sequence belongs to the lyase 1 family. Adenylosuccinate lyase subfamily. Homooligomer. Residues from neighboring subunits contribute catalytic and substrate-binding residues to each active site.

The catalysed reaction is N(6)-(1,2-dicarboxyethyl)-AMP = fumarate + AMP. The enzyme catalyses (2S)-2-[5-amino-1-(5-phospho-beta-D-ribosyl)imidazole-4-carboxamido]succinate = 5-amino-1-(5-phospho-beta-D-ribosyl)imidazole-4-carboxamide + fumarate. The protein operates within purine metabolism; AMP biosynthesis via de novo pathway; AMP from IMP: step 2/2. It participates in purine metabolism; IMP biosynthesis via de novo pathway; 5-amino-1-(5-phospho-D-ribosyl)imidazole-4-carboxamide from 5-amino-1-(5-phospho-D-ribosyl)imidazole-4-carboxylate: step 2/2. Functionally, catalyzes two reactions in de novo purine nucleotide biosynthesis. Catalyzes the breakdown of 5-aminoimidazole- (N-succinylocarboxamide) ribotide (SAICAR or 2-[5-amino-1-(5-phospho-beta-D-ribosyl)imidazole-4-carboxamido]succinate) to 5-aminoimidazole-4-carboxamide ribotide (AICAR or 5-amino-1-(5-phospho-beta-D-ribosyl)imidazole-4-carboxamide) and fumarate, and of adenylosuccinate (ADS or N(6)-(1,2-dicarboxyethyl)-AMP) to adenosine monophosphate (AMP) and fumarate. This Synechocystis sp. (strain ATCC 27184 / PCC 6803 / Kazusa) protein is Adenylosuccinate lyase (purB).